The sequence spans 167 residues: Photosystem I assembly protein Ycf3 (167 aa).

TPR repeat units lie at residues 35–68 (AFTYYRDGMSAQAEGEYAEALQNYYEAMRLEIDP), 72–105 (SYILYNIGLIHTSNGEHAKALEYYFQALERNPSL), and 120–153 (GEQAIQQQDIESSKAWFNQAAEYWKQAIQLAPGN).

This sequence belongs to the Ycf3 family.

Its subcellular location is the plastid. It is found in the chloroplast thylakoid membrane. In terms of biological role, essential for the assembly of the photosystem I (PSI) complex. May act as a chaperone-like factor to guide the assembly of the PSI subunits. This Chara vulgaris (Common stonewort) protein is Photosystem I assembly protein Ycf3.